A 230-amino-acid polypeptide reads, in one-letter code: 3,4-dihydroxy-2-butanone 4-phosphate synthase (230 aa).

Residues 42–43 (RE), Asp47, 155–159 (RRGHT), and Glu179 contribute to the D-ribulose 5-phosphate site. Residue Glu43 participates in Mg(2+) binding. His158 contributes to the Mg(2+) binding site.

It belongs to the DHBP synthase family. As to quaternary structure, homodimer. Requires Mg(2+) as cofactor. Mn(2+) is required as a cofactor.

The enzyme catalyses D-ribulose 5-phosphate = (2S)-2-hydroxy-3-oxobutyl phosphate + formate + H(+). It participates in cofactor biosynthesis; riboflavin biosynthesis; 2-hydroxy-3-oxobutyl phosphate from D-ribulose 5-phosphate: step 1/1. In terms of biological role, catalyzes the conversion of D-ribulose 5-phosphate to formate and 3,4-dihydroxy-2-butanone 4-phosphate. The sequence is that of 3,4-dihydroxy-2-butanone 4-phosphate synthase from Bordetella bronchiseptica (strain ATCC BAA-588 / NCTC 13252 / RB50) (Alcaligenes bronchisepticus).